The sequence spans 282 residues: Succinate dehydrogenase [ubiquinone] iron-sulfur subunit, mitochondrial (282 aa).

The transit peptide at 1 to 30 (MAAVVGVSLKRGFSATALGRVGLQFQACRE) directs the protein to the mitochondrion. 2 positions are modified to N6-acetyllysine: lysine 53 and lysine 57. The 80-residue stretch at 56 to 135 (DKPRMQTYKV…VSKIYPLPHM (80 aa)) folds into the 2Fe-2S ferredoxin-type domain. [2Fe-2S] cluster-binding residues include cysteine 95, cysteine 100, cysteine 103, and cysteine 115. Residues 148–220 (FYAQYKSIEP…PAVLMQAYRW (73 aa)) form an interaction with SDHAF1 region. One can recognise a 4Fe-4S ferredoxin-type domain in the interval 178-208 (DREKLDGLYECILCACCSTSCPSYWWNGDKY). Positions 188, 191, and 194 each coordinate [4Fe-4S] cluster. Residue cysteine 198 participates in [3Fe-4S] cluster binding. Residue tryptophan 203 coordinates a ubiquinone. Residues cysteine 245 and cysteine 251 each coordinate [3Fe-4S] cluster. Cysteine 255 lines the [4Fe-4S] cluster pocket.

It belongs to the succinate dehydrogenase/fumarate reductase iron-sulfur protein family. Component of complex II composed of four subunits: the flavoprotein (FP) SDHA, iron-sulfur protein (IP) SDHB, and a cytochrome b560 composed of SDHC and SDHD. Interacts with SDHAF1; the interaction is required for iron-sulfur cluster incorporation into SDHB. Requires [2Fe-2S] cluster as cofactor. [3Fe-4S] cluster serves as cofactor. It depends on [4Fe-4S] cluster as a cofactor.

Its subcellular location is the mitochondrion inner membrane. It carries out the reaction a quinone + succinate = fumarate + a quinol. It catalyses the reaction (R)-malate + a quinone = enol-oxaloacetate + a quinol. The enzyme catalyses (S)-malate + a quinone = enol-oxaloacetate + a quinol. The protein operates within carbohydrate metabolism; tricarboxylic acid cycle; fumarate from succinate (eukaryal route): step 1/1. Its activity is regulated as follows. Enol-oxaloacetate inhibits the succinate dehydrogenase activity. Iron-sulfur protein (IP) subunit of the succinate dehydrogenase complex (mitochondrial respiratory chain complex II), responsible for transferring electrons from succinate to ubiquinone (coenzyme Q). SDH also oxidizes malate to the non-canonical enol form of oxaloacetate, enol-oxaloacetate. Enol-oxaloacetate, which is a potent inhibitor of the succinate dehydrogenase activity, is further isomerized into keto-oxaloacetate. In Rattus norvegicus (Rat), this protein is Succinate dehydrogenase [ubiquinone] iron-sulfur subunit, mitochondrial (Sdhb).